The primary structure comprises 160 residues: V-type proton ATPase subunit c (160 aa).

Over 1–6 (MSDLCP) the chain is Lumenal. The helical transmembrane segment at 7–27 (VYAPFFGSIGCAAAIVFTCFG) threads the bilayer. Topologically, residues 28 to 53 (ASYGTAKSGVGICATSVTRPDLLVKN) are cytoplasmic. A helical membrane pass occupies residues 54-74 (VVPVVMAGIIAIYGLVVSVLV). The Lumenal segment spans residues 75–90 (SDSLSQKQALYTGFIQ). Residues 91–111 (LGAGLSVGLSGLAAGFAIGIV) form a helical membrane-spanning segment. At 112–129 (GDAGVRGTAQQPRLFVGM) the chain is on the cytoplasmic side. The helical transmembrane segment at 130 to 150 (ILILIFAEVLGLYGLIVALLL) threads the bilayer. The Lumenal portion of the chain corresponds to 151–160 (NSRASQDVTC).

It belongs to the V-ATPase proteolipid subunit family. In terms of assembly, V-ATPase is a heteromultimeric enzyme composed of a peripheral catalytic V1 complex (components A to H) attached to an integral membrane V0 proton pore complex (components: a, c, c', c'', d, e, f and VOA1). The decameric c-ring forms the proton-conducting pore, and is composed of eight proteolipid subunits c, one subunit c' and one subunit c''.

The protein localises to the vacuole membrane. Proton-conducting pore forming subunit of the V0 complex of vacuolar(H+)-ATPase (V-ATPase), a multisubunit enzyme composed of a peripheral complex (V1) that hydrolyzes ATP and a membrane integral complex (V0) that translocates protons. V-ATPase is responsible for acidifying and maintaining the pH of intracellular compartments. This Candida tropicalis (Yeast) protein is V-type proton ATPase subunit c (VMA3).